Consider the following 557-residue polypeptide: Ubiquitin C-terminal hydrolase 22 (557 aa).

Residues 36–130 (FRCFNDARIK…VSKQLFGLGM (95 aa)) form a UBP-type; degenerate zinc finger. The Zn(2+) site is built by C56, C59, C69, C72, C77, H80, H84, and H91. In terms of domain architecture, USP spans 177-531 (RGLNNLGSTC…ECYMLFYAQE (355 aa)). The active-site Nucleophile is C186. The active-site Proton acceptor is H491.

It belongs to the peptidase C19 family. In terms of assembly, component of a deubiquitination module (DUB module) formed by ENY2, SGF11, and UBP22 in Arabidopsis. Interacts directly with SGF11, but not with ENY2.

It is found in the nucleus. The protein resides in the nucleoplasm. The catalysed reaction is Thiol-dependent hydrolysis of ester, thioester, amide, peptide and isopeptide bonds formed by the C-terminal Gly of ubiquitin (a 76-residue protein attached to proteins as an intracellular targeting signal).. Component of a deubiquitination module (DUB module) that specifically deubiquinates monoubiquinated histone H2B (H2Bub). Does not seem to be a component of the TREX-2 complex. Seems to act independently of the SAGA multiprotein complex. The DUB module is responsible for the major H2Bub deubiquitinase activity in Arabidopsis. The sequence is that of Ubiquitin C-terminal hydrolase 22 from Arabidopsis thaliana (Mouse-ear cress).